The primary structure comprises 160 residues: Phosphopantetheine adenylyltransferase (160 aa).

Substrate is bound at residue Thr-10. ATP-binding positions include 10-11 (TF) and His-18. Residues Lys-42, Leu-74, and Arg-88 each coordinate substrate. ATP contacts are provided by residues 89 to 91 (GLR), Glu-99, and 124 to 130 (NSFISST).

The protein belongs to the bacterial CoaD family. Homohexamer. It depends on Mg(2+) as a cofactor.

The protein resides in the cytoplasm. It carries out the reaction (R)-4'-phosphopantetheine + ATP + H(+) = 3'-dephospho-CoA + diphosphate. The protein operates within cofactor biosynthesis; coenzyme A biosynthesis; CoA from (R)-pantothenate: step 4/5. In terms of biological role, reversibly transfers an adenylyl group from ATP to 4'-phosphopantetheine, yielding dephospho-CoA (dPCoA) and pyrophosphate. This Aeromonas salmonicida (strain A449) protein is Phosphopantetheine adenylyltransferase.